The sequence spans 319 residues: ATP-dependent 6-phosphofructokinase (319 aa).

Glycine 11 contributes to the ATP binding site. 21 to 25 serves as a coordination point for ADP; that stretch reads RAVVR. ATP contacts are provided by residues 72-73 and 102-105; these read RC and GNGS. Mg(2+) is bound at residue asparagine 103. 125 to 127 lines the substrate pocket; sequence TID. Residue aspartate 127 is the Proton acceptor of the active site. An ADP-binding site is contributed by arginine 154. Substrate is bound by residues arginine 162 and 169–171; that span reads MGR. Residues 185 to 187, arginine 211, and 213 to 215 contribute to the ADP site; these read GAE and KMH. Residues glutamate 222, arginine 243, and 249–252 contribute to the substrate site; that span reads HIQR.

It belongs to the phosphofructokinase type A (PFKA) family. ATP-dependent PFK group I subfamily. Prokaryotic clade 'B1' sub-subfamily. Homotetramer. Mg(2+) serves as cofactor.

The protein localises to the cytoplasm. It carries out the reaction beta-D-fructose 6-phosphate + ATP = beta-D-fructose 1,6-bisphosphate + ADP + H(+). It participates in carbohydrate degradation; glycolysis; D-glyceraldehyde 3-phosphate and glycerone phosphate from D-glucose: step 3/4. Allosterically activated by ADP and other diphosphonucleosides, and allosterically inhibited by phosphoenolpyruvate. Catalyzes the phosphorylation of D-fructose 6-phosphate to fructose 1,6-bisphosphate by ATP, the first committing step of glycolysis. The sequence is that of ATP-dependent 6-phosphofructokinase from Clostridium acetobutylicum (strain ATCC 824 / DSM 792 / JCM 1419 / IAM 19013 / LMG 5710 / NBRC 13948 / NRRL B-527 / VKM B-1787 / 2291 / W).